Reading from the N-terminus, the 207-residue chain is Small ribosomal subunit protein bS6c (207 aa).

A chloroplast-targeting transit peptide spans 1 to 59 (MASSLCVSNSTICPLPNVSSQPLLSFSHSLRPFISKSKPMCASIQKRDGSQFVVKSQAL). The interval 69–99 (GFGSDDDPTSPSGSGVSTALEDKPEPQCPPG) is disordered. The segment covering 77–86 (TSPSGSGVST) has biased composition (low complexity).

Belongs to the bacterial ribosomal protein bS6 family. In terms of assembly, part of the 30S ribosomal subunit.

Its subcellular location is the plastid. The protein resides in the chloroplast. Its function is as follows. Binds together with bS18 to 16S ribosomal RNA. The chain is Small ribosomal subunit protein bS6c (RPS6) from Arabidopsis thaliana (Mouse-ear cress).